Here is a 184-residue protein sequence, read N- to C-terminus: Adenine phosphoribosyltransferase (184 aa).

The protein belongs to the purine/pyrimidine phosphoribosyltransferase family. Homodimer.

It localises to the cytoplasm. The catalysed reaction is AMP + diphosphate = 5-phospho-alpha-D-ribose 1-diphosphate + adenine. It functions in the pathway purine metabolism; AMP biosynthesis via salvage pathway; AMP from adenine: step 1/1. Its function is as follows. Catalyzes a salvage reaction resulting in the formation of AMP, that is energically less costly than de novo synthesis. This is Adenine phosphoribosyltransferase from Parafrankia sp. (strain EAN1pec).